The primary structure comprises 483 residues: Altronate oxidoreductase (483 aa).

18-29 lines the NAD(+) pocket; sequence IIQFGEGNFLRA.

Belongs to the mannitol dehydrogenase family. UxaB subfamily.

It carries out the reaction D-altronate + NAD(+) = keto-D-tagaturonate + NADH + H(+). It participates in carbohydrate metabolism; pentose and glucuronate interconversion. This chain is Altronate oxidoreductase, found in Enterobacter sp. (strain 638).